Consider the following 408-residue polypeptide: Argininosuccinate synthase (408 aa).

ATP is bound by residues 10-18 and Ala37; that span reads AYSGGLDTS. Tyr90 and Ser95 together coordinate L-citrulline. Residue Gly120 coordinates ATP. Positions 122, 126, and 127 each coordinate L-aspartate. Asn126 is an L-citrulline binding site. Residues Arg130, Ser181, Ser190, Glu266, and Tyr278 each coordinate L-citrulline.

It belongs to the argininosuccinate synthase family. Type 1 subfamily. In terms of assembly, homotetramer.

The protein resides in the cytoplasm. The enzyme catalyses L-citrulline + L-aspartate + ATP = 2-(N(omega)-L-arginino)succinate + AMP + diphosphate + H(+). It functions in the pathway amino-acid biosynthesis; L-arginine biosynthesis; L-arginine from L-ornithine and carbamoyl phosphate: step 2/3. The polypeptide is Argininosuccinate synthase (Cereibacter sphaeroides (strain ATCC 17025 / ATH 2.4.3) (Rhodobacter sphaeroides)).